Here is a 425-residue protein sequence, read N- to C-terminus: Glutamate-1-semialdehyde 2,1-aminomutase (425 aa).

K265 carries the post-translational modification N6-(pyridoxal phosphate)lysine.

This sequence belongs to the class-III pyridoxal-phosphate-dependent aminotransferase family. HemL subfamily. As to quaternary structure, homodimer. The cofactor is pyridoxal 5'-phosphate.

The protein localises to the cytoplasm. It catalyses the reaction (S)-4-amino-5-oxopentanoate = 5-aminolevulinate. Its pathway is porphyrin-containing compound metabolism; protoporphyrin-IX biosynthesis; 5-aminolevulinate from L-glutamyl-tRNA(Glu): step 2/2. This is Glutamate-1-semialdehyde 2,1-aminomutase from Nitrosospira multiformis (strain ATCC 25196 / NCIMB 11849 / C 71).